A 407-amino-acid chain; its full sequence is Phosphopentomutase (407 aa).

Mn(2+) is bound by residues aspartate 10, aspartate 306, histidine 311, aspartate 347, histidine 348, and histidine 359.

The protein belongs to the phosphopentomutase family. It depends on Mn(2+) as a cofactor.

It is found in the cytoplasm. The enzyme catalyses 2-deoxy-alpha-D-ribose 1-phosphate = 2-deoxy-D-ribose 5-phosphate. It catalyses the reaction alpha-D-ribose 1-phosphate = D-ribose 5-phosphate. The protein operates within carbohydrate degradation; 2-deoxy-D-ribose 1-phosphate degradation; D-glyceraldehyde 3-phosphate and acetaldehyde from 2-deoxy-alpha-D-ribose 1-phosphate: step 1/2. Functionally, isomerase that catalyzes the conversion of deoxy-ribose 1-phosphate (dRib-1-P) and ribose 1-phosphate (Rib-1-P) to deoxy-ribose 5-phosphate (dRib-5-P) and ribose 5-phosphate (Rib-5-P), respectively. This chain is Phosphopentomutase, found in Pectobacterium atrosepticum (strain SCRI 1043 / ATCC BAA-672) (Erwinia carotovora subsp. atroseptica).